Here is a 679-residue protein sequence, read N- to C-terminus: Methionine--tRNA ligase (679 aa).

A 'HIGH' region motif is present at residues 15–25; the sequence is PYANGPVHIGH. Positions 147, 150, 160, and 163 each coordinate Zn(2+). The short motif at 332–336 is the 'KMSKS' region element; it reads KISTS. T335 is a binding site for ATP. A tRNA-binding domain is found at 578-679; that stretch reads DFMKLDIRVG…KEVKPGSEVK (102 aa).

It belongs to the class-I aminoacyl-tRNA synthetase family. MetG type 1 subfamily. In terms of assembly, homodimer. Requires Zn(2+) as cofactor.

It is found in the cytoplasm. The enzyme catalyses tRNA(Met) + L-methionine + ATP = L-methionyl-tRNA(Met) + AMP + diphosphate. Is required not only for elongation of protein synthesis but also for the initiation of all mRNA translation through initiator tRNA(fMet) aminoacylation. The polypeptide is Methionine--tRNA ligase (Parabacteroides distasonis (strain ATCC 8503 / DSM 20701 / CIP 104284 / JCM 5825 / NCTC 11152)).